The primary structure comprises 284 residues: Protein-S-isoprenylcysteine O-methyltransferase (284 aa).

At 1 to 16 (MAGCAARVPPGSEARL) the chain is on the cytoplasmic side. A helical membrane pass occupies residues 17 to 33 (SLATFLLGASVLALPLL). The Lumenal portion of the chain corresponds to 34–41 (TRAGLQGR). A helical membrane pass occupies residues 42 to 59 (TGLALYVAGLNALLLLLY). Over 60-69 (RPPRYQIAIR) the chain is Cytoplasmic. Residues 70-87 (ACFLGFVFGCGVLLSFSQ) traverse the membrane as a helical segment. Over 88-92 (SSWNH) the chain is Lumenal. The chain crosses the membrane as a helical span at residues 93–112 (FGWYVCSLSLFHYSEYLVTA). Residues 113 to 131 (VNNPKSLSLDSFLLNHSLE) lie on the Cytoplasmic side of the membrane. A helical transmembrane segment spans residues 132–149 (YTVAALSSWIEFTLENIF). Topologically, residues 150-154 (WPELK) are lumenal. A helical transmembrane segment spans residues 155 to 174 (QITWLSAAGLLMVIFGECLR). The Cytoplasmic segment spans residues 175-212 (KVAMFTAGSNFNHVVQSEKSDTHTLVTSGVYAWCRHPS). S-adenosyl-L-methionine contacts are provided by residues glutamine 190, 197-200 (HTLV), tyrosine 205, and 210-213 (HPSY). Residues 213–228 (YVGWFYWSIGTQVMLC) form a helical membrane-spanning segment. Asparagine 229 is a topological domain (lumenal). The chain crosses the membrane as a helical span at residues 230–244 (PICGVVYALTVWRFF). Over 245–284 (RDRTEEEEISLIHFFGEEYLDYKKRVPTGLPFIKGVKVGL) the chain is Cytoplasmic. Arginine 247 is a binding site for substrate. Glutamate 251 is an S-adenosyl-L-methionine binding site.

Belongs to the class VI-like SAM-binding methyltransferase superfamily. Isoprenylcysteine carboxyl methyltransferase family.

It localises to the endoplasmic reticulum membrane. The enzyme catalyses [protein]-C-terminal S-[(2E,6E)-farnesyl]-L-cysteine + S-adenosyl-L-methionine = [protein]-C-terminal S-[(2E,6E)-farnesyl]-L-cysteine methyl ester + S-adenosyl-L-homocysteine. Its function is as follows. Catalyzes the post-translational methylation of isoprenylated C-terminal cysteine residues. The sequence is that of Protein-S-isoprenylcysteine O-methyltransferase from Rattus norvegicus (Rat).